The following is a 259-amino-acid chain: Putative pyrophosphorylase ModD (259 aa).

Belongs to the NadC/ModD family.

In Rhodobacter capsulatus (Rhodopseudomonas capsulata), this protein is Putative pyrophosphorylase ModD (modD).